A 413-amino-acid polypeptide reads, in one-letter code: Ribosomal RNA large subunit methyltransferase G (413 aa).

A disordered region spans residues 389-413; sequence EAEVEQAFDTETPHPQSALYGKPKA.

It belongs to the methyltransferase superfamily. RlmG family.

It is found in the cytoplasm. It carries out the reaction guanosine(1835) in 23S rRNA + S-adenosyl-L-methionine = N(2)-methylguanosine(1835) in 23S rRNA + S-adenosyl-L-homocysteine + H(+). In terms of biological role, specifically methylates the guanine in position 1835 (m2G1835) of 23S rRNA. The sequence is that of Ribosomal RNA large subunit methyltransferase G from Shewanella pealeana (strain ATCC 700345 / ANG-SQ1).